The sequence spans 405 residues: Tryptophan synthase beta chain (405 aa).

Position 95 is an N6-(pyridoxal phosphate)lysine (Lys-95).

The protein belongs to the TrpB family. In terms of assembly, tetramer of two alpha and two beta chains. The cofactor is pyridoxal 5'-phosphate.

The enzyme catalyses (1S,2R)-1-C-(indol-3-yl)glycerol 3-phosphate + L-serine = D-glyceraldehyde 3-phosphate + L-tryptophan + H2O. It participates in amino-acid biosynthesis; L-tryptophan biosynthesis; L-tryptophan from chorismate: step 5/5. Functionally, the beta subunit is responsible for the synthesis of L-tryptophan from indole and L-serine. The polypeptide is Tryptophan synthase beta chain (Pseudomonas putida (strain GB-1)).